A 111-amino-acid polypeptide reads, in one-letter code: Large ribosomal subunit protein uL22 (111 aa).

This sequence belongs to the universal ribosomal protein uL22 family. Part of the 50S ribosomal subunit.

Functionally, this protein binds specifically to 23S rRNA; its binding is stimulated by other ribosomal proteins, e.g. L4, L17, and L20. It is important during the early stages of 50S assembly. It makes multiple contacts with different domains of the 23S rRNA in the assembled 50S subunit and ribosome. Its function is as follows. The globular domain of the protein is located near the polypeptide exit tunnel on the outside of the subunit, while an extended beta-hairpin is found that lines the wall of the exit tunnel in the center of the 70S ribosome. The protein is Large ribosomal subunit protein uL22 of Mycoplasma mycoides subsp. mycoides SC (strain CCUG 32753 / NCTC 10114 / PG1).